Consider the following 113-residue polypeptide: Dynein light chain Tctex-type 1 (113 aa).

Position 1 is an N-acetylmethionine (methionine 1). The tract at residues 41-113 (QWTTNVVEQT…CIVSAFGLSI (73 aa)) is interaction with GNB1.

This sequence belongs to the dynein light chain Tctex-type family. Homodimer. The cytoplasmic dynein 1 complex consists of two catalytic heavy chains (HCs) and a number of non-catalytic subunits presented by intermediate chains (ICs), light intermediate chains (LICs) and light chains (LCs); the composition seems to vary in respect to the IC, LIC and LC composition. The heavy chain homodimer serves as a scaffold for the probable homodimeric assembly of the non-catalytic subunits. The ICs and LICs bind directly to the HC dimer and the LCs assemble on the IC dimer. DYNLT1 and DYNLT3 compete for association with dynein IC (DYNC1I1 or DYNC1I2). Self-associates. Interacts with RHO. Interacts with DYNC1I1 and DYNC1I2. Interacts with DOC2A, DOC2B and SCN10A. Interacts with PVR. Interacts with SVIL isoform 2. Interacts with GNB1; the interaction occurs in presence of guanine nucleotide-binding protein G(T) subunit gamma; the interaction diminishes the association of DYNLT1 with dynein IC (DYNC1I1 or DYNC1I2). Interacts with GNB2, GNB3 and GNB5; the interactions occur in presence of guanine nucleotide-binding protein G(T) subunit gamma. Interacts with ACVR2B and ARHGEF2. Interacts with DNAI4. Interacts with CFAP61. Post-translationally, phosphorylated by BMPR2. The phosphorylation status is proposed to regulate the association with the cytoplasmic dynein complex and may have role in cytoplasmic dynein cargo release.

It is found in the golgi apparatus. Its subcellular location is the cytoplasm. The protein localises to the cytoskeleton. The protein resides in the spindle. Its function is as follows. Acts as one of several non-catalytic accessory components of the cytoplasmic dynein 1 complex that are thought to be involved in linking dynein to cargos and to adapter proteins that regulate dynein function. Cytoplasmic dynein 1 acts as a motor for the intracellular retrograde motility of vesicles and organelles along microtubules. Binds to transport cargos and is involved in apical cargo transport such as rhodopsin-bearing vesicles in polarized epithelia. May also be a accessory component of axonemal dynein. In terms of biological role, plays a role in neuronal morphogenesis; the function is independent of cytoplasmic dynein and seems to be coupled to regulation of the actin cytoskeleton by enhancing Rac1 activity. The function in neurogenesis may be regulated by association with a G-protein beta-gamma dimer. May function as a receptor-independent activator of heterotrimeric G-protein signaling; the activation appears to be independent of a nucleotide exchange. Plays a role in regulating neurogenesis; inhibits the genesis of neurons from precursor cells during cortical development presumably by antagonizing ARHGEF2. Involved in the regulation of mitotic spindle orientation. Unrelated to the role in retrograde microtubule-associated movement may play a role in the dimerization of cytoplasmic proteins/domains such as for ACVR2B. Binds to the cytoplasmic domain of ACVR2B and, in vitro, inhibits ACVR2B signaling. The sequence is that of Dynein light chain Tctex-type 1 (DYNLT1) from Bos taurus (Bovine).